We begin with the raw amino-acid sequence, 1183 residues long: SRC kinase signaling inhibitor 1 (1183 aa).

Residues 1–44 (MGNAPSQDPERSSPPMLSADDAEYPREYRTLGGGGGGGSGGRRF) form a disordered region. Serine 13 and serine 18 each carry phosphoserine. Residues 31-41 (LGGGGGGGSGG) are compositionally biased toward gly residues. Phosphoserine is present on serine 45. Position 52 is a phosphothreonine (threonine 52). 7 positions are modified to phosphoserine: serine 53, serine 64, serine 143, serine 165, serine 169, serine 179, and serine 225. Tyrosine 241 carries the phosphotyrosine modification. A disordered region spans residues 284–379 (ASRESSPTRR…ERRDVKPDED (96 aa)). Residues 286 to 296 (RESSPTRRLNN) show a composition bias toward polar residues. Low complexity predominate over residues 297–306 (LSPAPHLASG). A phosphoserine mark is found at serine 298, serine 307, and serine 324. Positions 313–331 (PSGLPSGLQSGSPSRSRLS) are enriched in low complexity. An omega-N-methylarginine mark is found at arginine 329 and arginine 336. 3 positions are modified to phosphoserine: serine 343, serine 362, and serine 364. The span at 369–379 (LERRDVKPDED) shows a compositional bias: basic and acidic residues. A Phosphotyrosine modification is found at tyrosine 396. Positions 466-643 (YGFRLPPSSP…ASSTPAGQPT (178 aa)) are disordered. Positions 485-497 (PGGPPPPHSPYSG) are enriched in pro residues. Phosphoserine is present on residues serine 493, serine 496, and serine 500. Arginine 501 is subject to Omega-N-methylarginine. Serine 503, serine 513, serine 515, serine 517, and serine 522 each carry phosphoserine. The span at 524–541 (GGKTRSAGSASTAGAPPS) shows a compositional bias: low complexity. Over residues 562–574 (KDTETRERMEAME) the composition is skewed to basic and acidic residues. Residues serine 598 and serine 621 each carry the phosphoserine modification. Phosphothreonine occurs at positions 624 and 637. Positions 634–643 (ASSTPAGQPT) are enriched in low complexity. Residues 647 to 697 (RLQMQLHLRGLQNSASDLRGQLQQLRKLQLQNQESVRALLKRTEAELSMRV) are interaction with SNAP25. Coiled coils occupy residues 654–674 (LRGLQNSASDLRGQLQQLRKL) and 726–746 (EELITQQLNDLEKSVEKIQRD). Serine 844, serine 857, and serine 866 each carry phosphoserine. Disordered stretches follow at residues 861–907 (EMPP…KAVS) and 949–1032 (DCAS…VTSK). Position 884 is a phosphothreonine (threonine 884). A Phosphoserine modification is found at serine 987. The span at 1002–1011 (KSPPPPPPRR) shows a compositional bias: pro residues. Residues serine 1043 and serine 1060 each carry the phosphoserine modification. Disordered stretches follow at residues 1058 to 1081 (AVSEVARPASTPPIMASAIKDEDD) and 1105 to 1183 (GASR…SISF). Residues 1135–1183 (QAQQQATKPSKEMSGSNETSSPVSEKPSASRTSIPVLTSFGARNSSISF) show a composition bias toward polar residues.

The protein belongs to the SRCIN1 family. Interacts with the N-terminal coiled-coil region of SNAP25. Interacts with BCAR1/p130Cas and SRC through its C-terminal domain. Interacts with CSK, CTTN, SORBS3/vinexin, SYP and MAPRE3/EB3. Tyrosine-phosphorylated in response to EGF and to cell adhesion to integrin ligands. In terms of tissue distribution, expressed in some primary breast carcinomas where its presence is significantly associated with increased tumor size. Not detected in normal breast tissue.

It is found in the cytoplasm. It localises to the cytoskeleton. Its subcellular location is the cell projection. The protein resides in the axon. The protein localises to the dendrite. It is found in the presynapse. It localises to the postsynapse. Its subcellular location is the postsynaptic density. In terms of biological role, acts as a negative regulator of SRC by activating CSK which inhibits SRC activity and downstream signaling, leading to impaired cell spreading and migration. Regulates dendritic spine morphology. Involved in calcium-dependent exocytosis. May play a role in neurotransmitter release or synapse maintenance. This Homo sapiens (Human) protein is SRC kinase signaling inhibitor 1.